The sequence spans 404 residues: Cytoplasmic tRNA 2-thiolation protein 2 (404 aa).

The protein belongs to the CTU2/NCS2 family.

The protein localises to the cytoplasm. It participates in tRNA modification; 5-methoxycarbonylmethyl-2-thiouridine-tRNA biosynthesis. In terms of biological role, plays a central role in 2-thiolation of mcm(5)S(2)U at tRNA wobble positions of tRNA(Lys), tRNA(Glu) and tRNA(Gln). May act by forming a heterodimer with NCS6/CTU1 that ligates sulfur from thiocarboxylated URM1 onto the uridine of tRNAs at wobble position. The chain is Cytoplasmic tRNA 2-thiolation protein 2 from Drosophila yakuba (Fruit fly).